A 310-amino-acid polypeptide reads, in one-letter code: Probable mitochondrial import receptor subunit TOM40-2 (310 aa).

Position 1 is an N-acetylmethionine (methionine 1).

This sequence belongs to the Tom40 family. Forms part of the preprotein translocase complex of the outer mitochondrial membrane (TOM complex) which consists of at least 6 different proteins (TOM5, TOM6, TOM7, TOM20, TOM22/TOM9 and TOM40). Present in a large lipid-enriched complex called mitochondrial transmembrane lipoprotein (MTL) complex made of proteins located in the two mitochondrial membranes, including the TOM complex and the core components of the MICOS complex and containing at least digalactosyldiacylglycerol (DGDG). Binds to MIC60. Component of a mitochondrial large protein complex that contains, at least, MIC60, DGS1, TOM40, TOM20 proteins, and petC/RISP. In terms of tissue distribution, expressed in roots, flowers, young cotyledons and leaves.

It localises to the mitochondrion outer membrane. In terms of biological role, central component of the receptor complex responsible for the recognition and translocation of cytosolically synthesized mitochondrial preproteins. Together with TOM22 functions as the transit peptide receptor at the surface of the mitochondrion outer membrane and facilitates the movement of preproteins into the translocation pore. Directly involved in the pore formation. In Arabidopsis thaliana (Mouse-ear cress), this protein is Probable mitochondrial import receptor subunit TOM40-2.